The sequence spans 224 residues: Glycerol-3-phosphate acyltransferase (224 aa).

Transmembrane regions (helical) follow at residues 14–34, 64–84, 98–118, 127–147, and 160–180; these read FFPL…FAVI, TAAI…VMLV, MALV…FNFA, LGVL…TWLI, and LTAA…AWYL.

It belongs to the PlsY family. As to quaternary structure, probably interacts with PlsX.

Its subcellular location is the cell inner membrane. It carries out the reaction an acyl phosphate + sn-glycerol 3-phosphate = a 1-acyl-sn-glycero-3-phosphate + phosphate. It functions in the pathway lipid metabolism; phospholipid metabolism. Catalyzes the transfer of an acyl group from acyl-phosphate (acyl-PO(4)) to glycerol-3-phosphate (G3P) to form lysophosphatidic acid (LPA). This enzyme utilizes acyl-phosphate as fatty acyl donor, but not acyl-CoA or acyl-ACP. This chain is Glycerol-3-phosphate acyltransferase, found in Albidiferax ferrireducens (strain ATCC BAA-621 / DSM 15236 / T118) (Rhodoferax ferrireducens).